The primary structure comprises 589 residues: Chromodomain Y-like protein (589 aa).

Polar residues predominate over residues M1–T10. The interval M1–V57 is disordered. The span at K11–R30 shows a compositional bias: basic and acidic residues. Positions T55–T115 constitute a Chromo domain. The tract at residues T55–T300 is interaction with EZH2. Phosphoserine is present on S82. The segment at R110–S155 is disordered. Residues A117–R128 show a composition bias toward low complexity. K129 bears the N6,N6,N6-trimethyllysine; by EHMT2; alternate mark. Residue K129 is modified to N6,N6-dimethyllysine; by EHMT2; alternate. Position 129 is an N6-methyllysine; by EHMT2; alternate (K129). The span at S132–N143 shows a compositional bias: polar residues. Residues S164, S195, and S210 each carry the phosphoserine modification. A disordered region spans residues S202–P224. Basic and acidic residues predominate over residues F206–Q216. The segment at S353–K585 is acetyl-CoA-binding domain.

Forms multimers and multimerization is required for stable binding to chromatin. Interacts with HDAC1 and HDAC2 via its C-terminal acetyl-CoA-binding domain. Interacts with EZH2, EED, SUZ12, REST, EHMT1 and EHMT2. Part of a complex containing at least CDYL, REST, WIZ, SETB1, EHMT1 and EHMT2. Part of a complex containing at least CDYL, MIER1, MIER2, HDAC1 and HDAC2. Interacts with CHAF1A and CHAF1B; bridging the CAF-1 complex to the MCM2-7 (MCM) complex. Interacts with MCM3 and MCM5; bridging the CAF-1 complex to the MCM2-7 (MCM) complex. Recruited to Xist RNA-coated X chromosome. Interacts with EHMT2 and PRDM9; interaction only takes place when PRDM9 is bound to hotspot DNA. As to expression, expressed in the brain, with expression in the hippocampal dentate gyrus, CA1, striatum and cortex (at protein level). Expressed in the prelimbic cortex.

It is found in the nucleus. It localises to the chromosome. The enzyme catalyses 3-hydroxybutanoyl-CoA = (2E)-butenoyl-CoA + H2O. In terms of biological role, chromatin reader protein that recognizes and binds histone H3 trimethylated at 'Lys-9', dimethylated at 'Lys-27' and trimethylated at 'Lys-27' (H3K9me3, H3K27me2 and H3K27me3, respectively). Part of multimeric repressive chromatin complexes, where it is required for transmission and restoration of repressive histone marks, thereby preserving the epigenetic landscape. Required for chromatin targeting and maximal enzymatic activity of Polycomb repressive complex 2 (PRC2); acts as a positive regulator of PRC2 activity by bridging the pre-existing histone H3K27me3 and newly recruited PRC2 on neighboring nucleosomes. Acts as a corepressor for REST by facilitating histone-lysine N-methyltransferase EHMT2 recruitment and H3K9 dimethylation at REST target genes for repression. Involved in X chromosome inactivation in females: recruited to Xist RNA-coated X chromosome and facilitates propagation of H3K9me2 by anchoring EHMT2. Promotes EZH2 accumulation and H3K27me3 methylation at DNA double strand breaks (DSBs), thereby facilitating transcriptional repression at sites of DNA damage and homology-directed repair of DSBs. Required for neuronal migration during brain development by repressing expression of RHOA. By repressing the expression of SCN8A, contributes to the inhibition of intrinsic neuronal excitability and epileptogenesis. In addition to acting as a chromatin reader, acts as a hydro-lyase. Shows crotonyl-coA hydratase activity by mediating the conversion of crotonyl-CoA ((2E)-butenoyl-CoA) to beta-hydroxybutyryl-CoA (3-hydroxybutanoyl-CoA), thereby acting as a negative regulator of histone crotonylation. Histone crotonylation is required during spermatogenesis; down-regulation of histone crotonylation by CDYL regulates the reactivation of sex chromosome-linked genes in round spermatids and histone replacement in elongating spermatids. By regulating histone crotonylation and trimethylation of H3K27, may be involved in stress-induced depression-like behaviors, possibly by regulating VGF expression. Displays acetyltransferase activity toward tubulin in vitro; such activity is however unsure in vivo and additional evidences would be required to confirm this result. Its function is as follows. Not able to recognize and bind histone H3K9me3, histone H3K27me2 and histone H3K27me3, due to the presence of a N-terminal extension that inactivates the chromo domain. This Rattus norvegicus (Rat) protein is Chromodomain Y-like protein.